The primary structure comprises 704 residues: Protein NPG1 (704 aa).

TPR repeat units lie at residues N24 to F57, E58 to I90, S177 to L210, I309 to P342, P430 to S463, F555 to S588, A589 to S622, and R662 to D695.

As to quaternary structure, interacts with calmodulin in a calcium-dependent manner. Expressed only in pollen and in pollen tubes.

Functionally, calmodulin-binding protein essential for pollen germination, but not necessary for microsporogenesis or gametogenesis. The polypeptide is Protein NPG1 (Arabidopsis thaliana (Mouse-ear cress)).